The sequence spans 418 residues: Probable serine hydroxymethyltransferase (418 aa).

Residues L118 and 122–124 (GHL) each bind (6S)-5,6,7,8-tetrahydrofolate. At K226 the chain carries N6-(pyridoxal phosphate)lysine. Position 351-353 (351-353 (SPF)) interacts with (6S)-5,6,7,8-tetrahydrofolate.

It belongs to the SHMT family. In terms of assembly, homodimer. Pyridoxal 5'-phosphate is required as a cofactor.

It localises to the cytoplasm. The catalysed reaction is (6R)-5,10-methylene-5,6,7,8-tetrahydrofolate + glycine + H2O = (6S)-5,6,7,8-tetrahydrofolate + L-serine. Its pathway is one-carbon metabolism; tetrahydrofolate interconversion. Catalyzes the reversible interconversion of serine and glycine with tetrahydrofolate (THF) serving as the one-carbon carrier. This reaction serves as the major source of one-carbon groups required for the biosynthesis of purines, thymidylate, methionine, and other important biomolecules. This is Probable serine hydroxymethyltransferase from Mesomycoplasma hyopneumoniae (strain J / ATCC 25934 / NCTC 10110) (Mycoplasma hyopneumoniae).